The sequence spans 197 residues: Large ribosomal subunit protein bL9 (197 aa).

The disordered stretch occupies residues 178–197; sequence GEFFDPEAQEDEAAAGETAQ. Residues 181-191 show a composition bias toward acidic residues; that stretch reads FDPEAQEDEAA.

The protein belongs to the bacterial ribosomal protein bL9 family.

Functionally, binds to the 23S rRNA. This Bradyrhizobium sp. (strain BTAi1 / ATCC BAA-1182) protein is Large ribosomal subunit protein bL9.